The primary structure comprises 365 residues: Flagellar P-ring protein (365 aa).

Positions 1–21 are cleaved as a signal peptide; sequence MKSLRLVALFCCLLPLGMAHA.

The protein belongs to the FlgI family. As to quaternary structure, the basal body constitutes a major portion of the flagellar organelle and consists of four rings (L,P,S, and M) mounted on a central rod.

It localises to the periplasm. The protein resides in the bacterial flagellum basal body. In terms of biological role, assembles around the rod to form the L-ring and probably protects the motor/basal body from shearing forces during rotation. The protein is Flagellar P-ring protein of Aeromonas hydrophila subsp. hydrophila (strain ATCC 7966 / DSM 30187 / BCRC 13018 / CCUG 14551 / JCM 1027 / KCTC 2358 / NCIMB 9240 / NCTC 8049).